Here is a 182-residue protein sequence, read N- to C-terminus: MPLLNTITTPYAEAFLQVAESRKEVDQVVDQAKAVLALWNDCPELSGAMASPVLEVEAKKAALQKLFANQVTPSFLNLLKLLADRQRIGVLDAVLERLIELYREQRNIALATVTSAAELSEQQQAALQKKVQAVANTDKLEINLKIDPDLIGGFVVNVGSKVIDASVAGQVRRLGLALAKVS.

It belongs to the ATPase delta chain family. As to quaternary structure, F-type ATPases have 2 components, F(1) - the catalytic core - and F(0) - the membrane proton channel. F(1) has five subunits: alpha(3), beta(3), gamma(1), delta(1), epsilon(1). CF(0) has four main subunits: a(1), b(1), b'(1) and c(10-14). The alpha and beta chains form an alternating ring which encloses part of the gamma chain. F(1) is attached to F(0) by a central stalk formed by the gamma and epsilon chains, while a peripheral stalk is formed by the delta, b and b' chains.

The protein localises to the cellular thylakoid membrane. Functionally, f(1)F(0) ATP synthase produces ATP from ADP in the presence of a proton or sodium gradient. F-type ATPases consist of two structural domains, F(1) containing the extramembraneous catalytic core and F(0) containing the membrane proton channel, linked together by a central stalk and a peripheral stalk. During catalysis, ATP synthesis in the catalytic domain of F(1) is coupled via a rotary mechanism of the central stalk subunits to proton translocation. In terms of biological role, this protein is part of the stalk that links CF(0) to CF(1). It either transmits conformational changes from CF(0) to CF(1) or is implicated in proton conduction. This Prochlorococcus marinus (strain MIT 9303) protein is ATP synthase subunit delta.